The primary structure comprises 56 residues: Sex-specific storage protein 1 (56 aa).

This sequence belongs to the hemocyanin family. Expressed in fat body and ovary.

It localises to the secreted. Functionally, larval storage protein (LSP) which may serve as a store of amino acids for synthesis of adult proteins. The biosynthesis, accumulation and sequestration of storage protein-1 takes place during metamorphosis and saves energy for the non-feeding pupal stage. May also be essential for egg formation. In Amsacta albistriga (Red hairy caterpillar), this protein is Sex-specific storage protein 1.